The sequence spans 300 residues: Cation-efflux pump FieF (300 aa).

4 consecutive transmembrane segments (helical) span residues 12 to 32, 40 to 60, 82 to 102, and 114 to 134; these read AALS…FAWW, LAAL…LFVV, AALA…LTGF, and PGLG…LVTF. Residues Asp-45 and Asp-49 each contribute to the Zn(2+) site. Residues His-153 and Asp-157 each coordinate Zn(2+). The helical transmembrane segment at 164–184 threads the bilayer; it reads ILIALALSWYGFHRADALFAL.

The protein belongs to the cation diffusion facilitator (CDF) transporter (TC 2.A.4) family. FieF subfamily. As to quaternary structure, homodimer.

The protein localises to the cell inner membrane. The enzyme catalyses Zn(2+)(in) + H(+)(out) = Zn(2+)(out) + H(+)(in). The catalysed reaction is Cd(2+)(in) + H(+)(out) = Cd(2+)(out) + H(+)(in). It catalyses the reaction Fe(2+)(in) + H(+)(out) = Fe(2+)(out) + H(+)(in). Its function is as follows. Divalent metal cation transporter which exports Zn(2+), Cd(2+) and possibly Fe(2+). May be involved in zinc and iron detoxification by efflux. The polypeptide is Cation-efflux pump FieF (Yersinia enterocolitica serotype O:8 / biotype 1B (strain NCTC 13174 / 8081)).